Reading from the N-terminus, the 399-residue chain is Enoyl-[acyl-carrier-protein] reductase [NADH] (399 aa).

Residues 48-53 (GASTGY), 74-75 (FE), 111-112 (DA), and 139-140 (LA) each bind NAD(+). Position 225 (Tyr225) interacts with substrate. The active-site Proton donor is Tyr235. NAD(+) is bound by residues Lys244 and 274 to 276 (VVT).

The protein belongs to the TER reductase family. As to quaternary structure, monomer.

The enzyme catalyses a 2,3-saturated acyl-[ACP] + NAD(+) = a (2E)-enoyl-[ACP] + NADH + H(+). It participates in lipid metabolism; fatty acid biosynthesis. Functionally, involved in the final reduction of the elongation cycle of fatty acid synthesis (FAS II). Catalyzes the reduction of a carbon-carbon double bond in an enoyl moiety that is covalently linked to an acyl carrier protein (ACP). This Yersinia pestis bv. Antiqua (strain Antiqua) protein is Enoyl-[acyl-carrier-protein] reductase [NADH].